Here is a 161-residue protein sequence, read N- to C-terminus: MHELSLADVPSRIGQELGKSEWITVDQTTIDLFADATHDHQFIHVHPERAAVESPFGGTIAHGFLTLSLLSAMNFSGMPKIREQTMGLNYGLDRVRFMSPVKTGSRVRGRFVLSECQFRGASMLVTTYEVTVEIENENRPALTANWITIIQFDPNDRPKGI.

Positions 9–133 (VPSRIGQELG…LVTTYEVTVE (125 aa)) constitute a MaoC-like domain.

This sequence to the R.meliloti counterpart.

In terms of biological role, involved in the production of the root hair deformation (HAD) factor specifically on medicago. The polypeptide is Nodulation protein N (nodN) (Rhizobium leguminosarum bv. viciae).